Reading from the N-terminus, the 135-residue chain is Transcriptional regulator HosA (135 aa).

Residues 4–134 (RNKAFHQLRQ…FVQLVRKMMN (131 aa)) form the HTH marR-type domain. The H-T-H motif DNA-binding region spans 48 to 71 (QVALIEAAVSTKATLAEMLARMEN).

Involved in the temperature-dependent positive control of flagellum-driven swimming motility and cellular aggregation. Regulates fliC expression by directly interacting with fliC promoter. In Escherichia coli O157:H7, this protein is Transcriptional regulator HosA (hosA).